We begin with the raw amino-acid sequence, 316 residues long: Pantothenate kinase (316 aa).

95 to 102 (GSVAVGKS) serves as a coordination point for ATP.

This sequence belongs to the prokaryotic pantothenate kinase family.

It is found in the cytoplasm. The catalysed reaction is (R)-pantothenate + ATP = (R)-4'-phosphopantothenate + ADP + H(+). The protein operates within cofactor biosynthesis; coenzyme A biosynthesis; CoA from (R)-pantothenate: step 1/5. The protein is Pantothenate kinase of Salmonella gallinarum (strain 287/91 / NCTC 13346).